The sequence spans 74 residues: Small ribosomal subunit protein bS18 (74 aa).

It belongs to the bacterial ribosomal protein bS18 family. Part of the 30S ribosomal subunit. Forms a tight heterodimer with protein bS6.

Its function is as follows. Binds as a heterodimer with protein bS6 to the central domain of the 16S rRNA, where it helps stabilize the platform of the 30S subunit. This Novosphingobium aromaticivorans (strain ATCC 700278 / DSM 12444 / CCUG 56034 / CIP 105152 / NBRC 16084 / F199) protein is Small ribosomal subunit protein bS18.